We begin with the raw amino-acid sequence, 264 residues long: Thymidylate synthase (264 aa).

Residue arginine 21 participates in dUMP binding. Histidine 51 is a (6R)-5,10-methylene-5,6,7,8-tetrahydrofolate binding site. 126 to 127 serves as a coordination point for dUMP; it reads RR. Cysteine 146 acts as the Nucleophile in catalysis. Residues 166–169, asparagine 177, and 207–209 contribute to the dUMP site; these read RSCD and HLY. Residue aspartate 169 participates in (6R)-5,10-methylene-5,6,7,8-tetrahydrofolate binding. Alanine 263 is a binding site for (6R)-5,10-methylene-5,6,7,8-tetrahydrofolate.

This sequence belongs to the thymidylate synthase family. Bacterial-type ThyA subfamily. In terms of assembly, homodimer.

Its subcellular location is the cytoplasm. It catalyses the reaction dUMP + (6R)-5,10-methylene-5,6,7,8-tetrahydrofolate = 7,8-dihydrofolate + dTMP. The protein operates within pyrimidine metabolism; dTTP biosynthesis. Functionally, catalyzes the reductive methylation of 2'-deoxyuridine-5'-monophosphate (dUMP) to 2'-deoxythymidine-5'-monophosphate (dTMP) while utilizing 5,10-methylenetetrahydrofolate (mTHF) as the methyl donor and reductant in the reaction, yielding dihydrofolate (DHF) as a by-product. This enzymatic reaction provides an intracellular de novo source of dTMP, an essential precursor for DNA biosynthesis. The polypeptide is Thymidylate synthase (Photorhabdus laumondii subsp. laumondii (strain DSM 15139 / CIP 105565 / TT01) (Photorhabdus luminescens subsp. laumondii)).